We begin with the raw amino-acid sequence, 647 residues long: A-type voltage-gated potassium channel KCND1 (647 aa).

Over 1–183 the chain is Cytoplasmic; that stretch reads MAAGVATWLP…RAFENPHTST (183 aa). Residues 2–20 form an interaction with KCNIP1, KCNIP2, and other family members region; that stretch reads AAGVATWLPFARAAAVGWL. Residues His104, Cys131, and Cys132 each contribute to the Zn(2+) site. Residues 144–164 form a disordered region; that stretch reads AQRLAEDEEAEQTGDGPALPA. The chain crosses the membrane as a helical span at residues 184 to 205; it reads AALVFYYVTGFFIAVSVIANVV. Residues 206-230 are Extracellular-facing; sequence ETIPCRGPARRPPREQPCGDRFPLA. The helical transmembrane segment at 231–252 threads the bilayer; that stretch reads FFCMDTACVLIFTGEYLLRLFA. The Cytoplasmic segment spans residues 253-263; sequence APSRCRFLRSV. A helical transmembrane segment spans residues 264–284; sequence MSLIDVVAILPYYIGLLVPKN. The Extracellular segment spans residues 285–287; sequence EDV. A helical; Voltage-sensor transmembrane segment spans residues 288–308; sequence SGAFVTLRVFRVFRIFKFSRH. At 309-323 the chain is on the cytoplasmic side; that stretch reads SQGLRILGYTLKSCA. Positions 310-323 are S4-S5 linker; the sequence is QGLRILGYTLKSCA. Residues 324-345 traverse the membrane as a helical segment; sequence SELGFLLFSLTMAIIIFATVMF. The Extracellular segment spans residues 346–359; the sequence is YAEKGTSKTNFTSI. Residues 360 to 371 constitute an intramembrane region (helical); sequence PAAFWYTIVTMT. Residues 372 to 377 carry the Selectivity filter motif; that stretch reads TLGYGD. Residues 372–379 lie within the membrane without spanning it; the sequence is TLGYGDMV. The Extracellular portion of the chain corresponds to 380–386; that stretch reads PSTIAGK. Residues 387–415 form a helical membrane-spanning segment; sequence IFGSICSLSGVLVIALPVPVIVSNFSRIY. The Cytoplasmic portion of the chain corresponds to 416–647; it reads HQNQRADKRR…LPETVKISSL (232 aa). Residues 474-489 form a required for dendritic targeting region; the sequence is FEQQHHHLLHCLEKTT. The segment covering 510-520 has biased composition (low complexity); sequence GRTSRSTSVSS. Residues 510–531 form a disordered region; it reads GRTSRSTSVSSQPVGPSSLLSS. Residues 521–530 show a composition bias toward polar residues; sequence QPVGPSSLLS. Phosphoserine is present on Ser555. 2 disordered regions span residues 564-584 and 601-634; these read GLRR…PHDS and IPTP…RLGT.

The protein belongs to the potassium channel family. D (Shal) (TC 1.A.1.2) subfamily. Kv4.1/KCND1 sub-subfamily. As to quaternary structure, component of heteromultimeric potassium channels. Identified in potassium channel complexes containing KCND1, KCND2, KCND3, KCNIP1, KCNIP2, KCNIP3, KCNIP4, DPP6 and DPP10. In terms of tissue distribution, detected in carotid body chemoreceptor cells and in frontal cortex.

It is found in the cell membrane. It catalyses the reaction K(+)(in) = K(+)(out). Its function is as follows. A-type voltage-gated potassium channel that mediates transmembrane potassium transport in excitable membranes in the brain. Mediates A-type current I(SA) in suprachiasmatic nucleus (SCN) neurons. Exhibits a low-threshold A-type current with a hyperpolarized steady-state inactivation midpoint and the recovery process was steeply voltage-dependent, with recovery being markedly faster at more negative potentials. May regulates repetitive firing rates in the suprachiasmatic nucleus (SCN) neurons and circadian rhythms in neuronal excitability and behavior. Contributes to the regulation of the circadian rhythm of action potential firing in suprachiasmatic nucleus neurons, which regulates the circadian rhythm of locomotor activity. The regulatory subunit KCNIP1 modulates the kinetics of channel inactivation, increases the current amplitudes and accelerates recovery from inactivation, shifts activation in a depolarizing direction. The regulatory subunit DPP10 decreases the voltage sensitivity of the inactivation channel gating. This Oryctolagus cuniculus (Rabbit) protein is A-type voltage-gated potassium channel KCND1.